Here is an 89-residue protein sequence, read N- to C-terminus: Small ribosomal subunit protein uS15 (89 aa).

The protein belongs to the universal ribosomal protein uS15 family. Part of the 30S ribosomal subunit. Forms a bridge to the 50S subunit in the 70S ribosome, contacting the 23S rRNA.

Functionally, one of the primary rRNA binding proteins, it binds directly to 16S rRNA where it helps nucleate assembly of the platform of the 30S subunit by binding and bridging several RNA helices of the 16S rRNA. Forms an intersubunit bridge (bridge B4) with the 23S rRNA of the 50S subunit in the ribosome. This is Small ribosomal subunit protein uS15 from Bdellovibrio bacteriovorus (strain ATCC 15356 / DSM 50701 / NCIMB 9529 / HD100).